The following is a 135-amino-acid chain: Cofilin-4 (135 aa).

Positions 3-135 (SCASINDEVI…SQSLVEERCK (133 aa)) constitute an ADF-H domain.

This sequence belongs to the actin-binding proteins ADF family.

Its subcellular location is the cytoplasm. It is found in the cytoskeleton. Its function is as follows. Controls actin polymerization and depolymerization. The chain is Cofilin-4 (cofE) from Dictyostelium discoideum (Social amoeba).